We begin with the raw amino-acid sequence, 64 residues long: Prokaryotic ubiquitin-like protein Pup (64 aa).

Basic and acidic residues predominate over residues 1–11; that stretch reads MAQEQTKRTGG. The interval 1–38 is disordered; the sequence is MAQEQTKRTGGGDEDDTPGGDGAAGQERREKLAEDTDD. The ARC ATPase binding stretch occupies residues 21-58; it reads DGAAGQERREKLAEDTDDLLDEIDDVLEENAEDFVRAY. Residues 24-52 adopt a coiled-coil conformation; sequence AGQERREKLAEDTDDLLDEIDDVLEENAE. Deamidated glutamine is present on glutamine 64. Residue glutamine 64 forms an Isoglutamyl lysine isopeptide (Gln-Lys) (interchain with K-? in acceptor proteins) linkage.

This sequence belongs to the prokaryotic ubiquitin-like protein family. As to quaternary structure, strongly interacts with the proteasome-associated ATPase ARC through a hydrophobic interface; the interacting region of Pup lies in its C-terminal half. There is one Pup binding site per ARC hexamer ring. Post-translationally, is modified by deamidation of its C-terminal glutamine to glutamate by the deamidase Dop, a prerequisite to the subsequent pupylation process.

It participates in protein degradation; proteasomal Pup-dependent pathway. Functionally, protein modifier that is covalently attached to lysine residues of substrate proteins, thereby targeting them for proteasomal degradation. The tagging system is termed pupylation. This is Prokaryotic ubiquitin-like protein Pup from Rhodococcus opacus (strain B4).